The sequence spans 429 residues: UDP-N-acetylglucosamine 1-carboxyvinyltransferase 2 (429 aa).

22-23 (KN) contacts phosphoenolpyruvate. Arg-93 is a UDP-N-acetyl-alpha-D-glucosamine binding site. The Proton donor role is filled by Cys-117. Cys-117 carries the post-translational modification 2-(S-cysteinyl)pyruvic acid O-phosphothioketal. Residues 122–126 (RPIDQ), Asp-305, and Ile-327 contribute to the UDP-N-acetyl-alpha-D-glucosamine site.

This sequence belongs to the EPSP synthase family. MurA subfamily.

It localises to the cytoplasm. It carries out the reaction phosphoenolpyruvate + UDP-N-acetyl-alpha-D-glucosamine = UDP-N-acetyl-3-O-(1-carboxyvinyl)-alpha-D-glucosamine + phosphate. Its pathway is cell wall biogenesis; peptidoglycan biosynthesis. Cell wall formation. Adds enolpyruvyl to UDP-N-acetylglucosamine. The protein is UDP-N-acetylglucosamine 1-carboxyvinyltransferase 2 of Bacillus cereus (strain ATCC 14579 / DSM 31 / CCUG 7414 / JCM 2152 / NBRC 15305 / NCIMB 9373 / NCTC 2599 / NRRL B-3711).